Here is a 209-residue protein sequence, read N- to C-terminus: Ribonuclease HII (209 aa).

Positions 19–209 (CTIVGVDEVG…ASGITKLYNK (191 aa)) constitute an RNase H type-2 domain. A divalent metal cation is bound by residues D25, E26, and D118.

Belongs to the RNase HII family. Requires Mn(2+) as cofactor. It depends on Mg(2+) as a cofactor.

The protein localises to the cytoplasm. It catalyses the reaction Endonucleolytic cleavage to 5'-phosphomonoester.. In terms of biological role, endonuclease that specifically degrades the RNA of RNA-DNA hybrids. This chain is Ribonuclease HII, found in Ehrlichia chaffeensis (strain ATCC CRL-10679 / Arkansas).